The chain runs to 281 residues: Bifunctional protein FolD (281 aa).

NADP(+) is bound by residues 165 to 167 (GRG), Thr-192, and Val-233.

This sequence belongs to the tetrahydrofolate dehydrogenase/cyclohydrolase family. In terms of assembly, homodimer.

The enzyme catalyses (6R)-5,10-methylene-5,6,7,8-tetrahydrofolate + NADP(+) = (6R)-5,10-methenyltetrahydrofolate + NADPH. It carries out the reaction (6R)-5,10-methenyltetrahydrofolate + H2O = (6R)-10-formyltetrahydrofolate + H(+). The protein operates within one-carbon metabolism; tetrahydrofolate interconversion. Its function is as follows. Catalyzes the oxidation of 5,10-methylenetetrahydrofolate to 5,10-methenyltetrahydrofolate and then the hydrolysis of 5,10-methenyltetrahydrofolate to 10-formyltetrahydrofolate. In Mycobacterium marinum (strain ATCC BAA-535 / M), this protein is Bifunctional protein FolD.